We begin with the raw amino-acid sequence, 434 residues long: Trigger factor (434 aa).

In terms of domain architecture, PPIase FKBP-type spans 163–248 (GDTAVIDFAG…VHDIKRKELP (86 aa)).

This sequence belongs to the FKBP-type PPIase family. Tig subfamily.

The protein localises to the cytoplasm. It carries out the reaction [protein]-peptidylproline (omega=180) = [protein]-peptidylproline (omega=0). Its function is as follows. Involved in protein export. Acts as a chaperone by maintaining the newly synthesized protein in an open conformation. Functions as a peptidyl-prolyl cis-trans isomerase. This chain is Trigger factor, found in Shouchella clausii (strain KSM-K16) (Alkalihalobacillus clausii).